The chain runs to 669 residues: Small ribosomal subunit protein mS39 (669 aa).

A mitochondrion-targeting transit peptide spans 1–13 (MAAPCVRLGSVRC). PPR repeat units follow at residues 129 to 163 (IEGVSEEALKERIQLRRIKESIDLFDQLLQGGTAP), 164 to 199 (SLETTNRLLDLICFYGDREPTRDIQTSEQNQQDDQD), 209 to 239 (RPGQYRKASEILGSWRENNNAERIFNLMPER), 240 to 274 (NAHSFCTLIQGMVKYGSSNKAFNTYTDLMNNRLTA), 275 to 314 (DVQTFNALILAAPDMKEKYNEKWDLIVELLKHMVQQNVRP), 315 to 351 (NLLTFNSVLKSLRKCGTMARGLALQTINEMKALNIEP), 352 to 392 (SLGT…FTLR), 396 to 430 (DVYFFTNAMRVCLDLKDIELAYRLHALQQTADNRG), 438 to 472 (QSTYYGRFFNLLCMMENIDVILKWYRELIPSLYYP), 473 to 507 (NSRGMLDLLQALDMDNCLDLIPQIWKDIKQIGHSN), and 556 to 590 (SSASLGNISVLLARAGRTEEAWKMLQRFKTNHRVP). Residues 186–218 (DIQTSEQNQQDDQDQQETEDSKKRPGQYRKASE) are disordered. Residues 194–203 (QQDDQDQQET) show a composition bias toward acidic residues. A disordered region spans residues 648-669 (EDLQKSHSSSSSSSESSDSDRE). Over residues 653–663 (SHSSSSSSSES) the composition is skewed to low complexity.

The protein belongs to the mitochondrion-specific ribosomal protein mS39 family.

The protein localises to the mitochondrion. Its function is as follows. Mitochondrial protein that may have a role in mitochondrial translation. In Xenopus laevis (African clawed frog), this protein is Small ribosomal subunit protein mS39 (ptcd3).